The sequence spans 89 residues: Envelope protein US9 (89 aa).

Over residues 1–10 the composition is skewed to basic and acidic residues; the sequence is MTSRPADQDS. The segment at 1–21 is disordered; the sequence is MTSRPADQDSVRSSASVPLYP. At 1–66 the chain is on the intravirion side; it reads MTSRPADQDS…RRRRTRCVGL (66 aa). An Internalization motif motif is present at residues 20–23; sequence YPAA. An acidic region spans residues 29 to 38; that stretch reads EAYYSESEDE. 2 positions are modified to phosphoserine; by host CK2: S33 and S35. A helical; Signal-anchor for type II membrane protein membrane pass occupies residues 67–87; the sequence is VIACLVVALLSGGFGALLVWL. The Virion surface portion of the chain corresponds to 88 to 89; the sequence is LR.

The protein belongs to the alphaherpesvirinae envelope protein US9 family. Phosphorylated on serines within the acidic cluster, possibly by host CK2. Phosphorylation determines whether endocytosed viral US9 traffics to the trans-Golgi network or recycles to the cell membrane.

The protein localises to the virion membrane. It is found in the host Golgi apparatus membrane. Its subcellular location is the host smooth endoplasmic reticulum membrane. The protein resides in the host cell membrane. Essential for the anterograde spread of the infection throughout the host nervous system. Together with the gE/gI heterodimer, US9 is involved in the sorting and transport of viral structural components toward axon tips. This Homo sapiens (Human) protein is Envelope protein US9.